Here is a 431-residue protein sequence, read N- to C-terminus: Protein CLT2, chloroplastic (431 aa).

The transit peptide at 1 to 79 (MDTVLMATTP…PMRRPRFSVG (79 aa)) directs the protein to the chloroplast. 10 helical membrane-spanning segments follow: residues 99 to 119 (VVIV…LVPM), 122 to 142 (YPFF…FTIL), 163 to 183 (FAII…AAAM), 188 to 208 (VIPI…LLIL), 212 to 232 (FLLN…VAVS), 244 to 264 (IGFL…GASI), 284 to 304 (IFVV…LLLP), 343 to 363 (ILPL…LHLV), 365 to 385 (ISSA…AVYI), and 403 to 423 (FTMG…PTTP).

It belongs to the CRT-like transporter family.

The protein localises to the plastid. It localises to the chloroplast membrane. Its function is as follows. Involved in thiol transport from the plastid to the cytosol. Transports probably both glutathione (GSH) and its precursor, gamma-glutamylcysteine (gamma-EC). This Arabidopsis thaliana (Mouse-ear cress) protein is Protein CLT2, chloroplastic.